The chain runs to 84 residues: MTDKIRTLQGRVTSDKMEKSIVVAIERFVKHPIYGKFIKRTTKLHVHDENNECGIGDVVIIRECRPLSKTKSWTLVRVVEKAIL.

Belongs to the universal ribosomal protein uS17 family. In terms of assembly, part of the 30S ribosomal subunit.

One of the primary rRNA binding proteins, it binds specifically to the 5'-end of 16S ribosomal RNA. This is Small ribosomal subunit protein uS17 from Erwinia tasmaniensis (strain DSM 17950 / CFBP 7177 / CIP 109463 / NCPPB 4357 / Et1/99).